The following is a 496-amino-acid chain: Docking protein 3 (496 aa).

The disordered stretch occupies residues 18–38; sequence LSLDGGTGSGQKGKCEEFPSS. In terms of domain architecture, PH spans 63 to 179; sequence PIKDGILYQQ…WMGPICQLAF (117 aa). A Phosphoserine modification is found at Ser-194. Residues 213 to 317 enclose the IRS-type PTB domain; it reads EVGEFPVVVQ…ARQRERLPEL (105 aa). The disordered stretch occupies residues 313-363; the sequence is RLPELTRPQPCPLPRATSLPSLDTPGELREMPPGPEPPTSRKMHLAEPGPQ. A phosphoserine mark is found at Ser-330 and Ser-364. Tyr-381 bears the Phosphotyrosine mark. The interval 408 to 447 is disordered; that stretch reads PTLHGGEPEPHEGPGSRSPTTSPIYHNGQDLSWPGPANDS. Ser-425 is modified (phosphoserine).

This sequence belongs to the DOK family. Type A subfamily. On tyrosine phosphorylation, interacts with CSK and INPP5D/SHIP1 via their SH2 domains. Both Tyr-381 and Tyr-398 are required for interaction with INPP5D. Only Tyr-381 is required for interaction with CSK. Binds ABL1 through the PTB domain and in a kinase-dependent manner. Does not interact with RasGAP. Post-translationally, constitutively tyrosine-phosphorylated. In terms of processing, on IL2 stimulation, phosphorylated on C-terminal tyrosine residues possibly by Src kinases. Can also be phosphorylated by ABL1 kinase. In terms of tissue distribution, expressed in spleen.

The protein localises to the cytoplasm. Its subcellular location is the cell membrane. Its function is as follows. DOK proteins are enzymatically inert adaptor or scaffolding proteins. They provide a docking platform for the assembly of multimolecular signaling complexes. DOK3 is a negative regulator of JNK signaling in B-cells through interaction with INPP5D/SHIP1. May modulate ABL1 function. This Homo sapiens (Human) protein is Docking protein 3 (DOK3).